A 134-amino-acid chain; its full sequence is Two-component response regulator ORR5 (134 aa).

A Response regulatory domain is found at 16 to 133; the sequence is HVLAVDDSSV…DVSRLCSRVL (118 aa). Position 66 is a 4-aspartylphosphate (Asp66).

It belongs to the ARR family. Type-A subfamily. Two-component system major event consists of a His-to-Asp phosphorelay between a sensor histidine kinase (HK) and a response regulator (RR). In plants, the His-to-Asp phosphorelay involves an additional intermediate named Histidine-containing phosphotransfer protein (HPt). This multistep phosphorelay consists of a His-Asp-His-Asp sequential transfer of a phosphate group between first a His and an Asp of the HK protein, followed by the transfer to a conserved His of the HPt protein and finally the transfer to an Asp in the receiver domain of the RR protein. Expressed in mature leaves and shoots, and at low levels in roots and flowers.

Functionally, functions as a response regulator involved in His-to-Asp phosphorelay signal transduction system. Phosphorylation of the Asp residue in the receiver domain activates the ability of the protein to promote the transcription of target genes. Type-A response regulators seem to act as negative regulators of the cytokinin signaling. In Oryza sativa subsp. indica (Rice), this protein is Two-component response regulator ORR5.